The following is a 44-amino-acid chain: Cuticle protein CP463 (44 aa).

Tandem repeats lie at residues 3–20 and 27–44.

In terms of tissue distribution, calcified shell.

The polypeptide is Cuticle protein CP463 (Cancer pagurus (Rock crab)).